The chain runs to 468 residues: N-acyl-phosphatidylethanolamine-hydrolyzing phospholipase D, mitochondrial (468 aa).

A mitochondrion-targeting transit peptide spans 1–39 (MNFVTCHVQMRLLLQRRLVRLRESELFRPQTSLSTFKRH). A helical transmembrane segment spans residues 54 to 76 (YARILLLSVLVPYTGYAFYVSLA). Zn(2+)-binding residues include His265, His267, Asp269, His270, His332, and His425.

The protein belongs to the NAPE-PLD family. It depends on Zn(2+) as a cofactor.

The protein resides in the mitochondrion membrane. It catalyses the reaction an N-acyl-1,2-diacyl-sn-glycero-3-phosphoethanolamine + H2O = an N-acylethanolamine + a 1,2-diacyl-sn-glycero-3-phosphate + H(+). In terms of biological role, hydrolyzes N-acyl-phosphatidylethanolamines (NAPEs) to produce N-acylethanolamines (NAEs). The protein is N-acyl-phosphatidylethanolamine-hydrolyzing phospholipase D, mitochondrial (FMP30) of Saccharomyces cerevisiae (strain ATCC 204508 / S288c) (Baker's yeast).